Here is a 376-residue protein sequence, read N- to C-terminus: Chaperone protein DnaJ (376 aa).

In terms of domain architecture, J spans 4–68 (DYYQLLGVAR…ETRARYDQFG (65 aa)). The segment at 135 to 217 (GGEKEIRVTH…CGGAGRLRRP (83 aa)) adopts a CR-type zinc-finger fold. Zn(2+) contacts are provided by Cys-148, Cys-151, Cys-165, Cys-168, Cys-191, Cys-194, Cys-205, and Cys-208. CXXCXGXG motif repeat units follow at residues 148 to 155 (CGTCQGSG), 165 to 172 (CTTCGGAG), 191 to 198 (CPTCEGSG), and 205 to 212 (CDDCGGAG).

Belongs to the DnaJ family. In terms of assembly, homodimer. Zn(2+) serves as cofactor.

Its subcellular location is the cytoplasm. In terms of biological role, participates actively in the response to hyperosmotic and heat shock by preventing the aggregation of stress-denatured proteins and by disaggregating proteins, also in an autonomous, DnaK-independent fashion. Unfolded proteins bind initially to DnaJ; upon interaction with the DnaJ-bound protein, DnaK hydrolyzes its bound ATP, resulting in the formation of a stable complex. GrpE releases ADP from DnaK; ATP binding to DnaK triggers the release of the substrate protein, thus completing the reaction cycle. Several rounds of ATP-dependent interactions between DnaJ, DnaK and GrpE are required for fully efficient folding. Also involved, together with DnaK and GrpE, in the DNA replication of plasmids through activation of initiation proteins. The chain is Chaperone protein DnaJ from Synechococcus sp. (strain ATCC 27144 / PCC 6301 / SAUG 1402/1) (Anacystis nidulans).